A 95-amino-acid polypeptide reads, in one-letter code: FXYD domain-containing ion transport regulator 6 (95 aa).

The first 18 residues, 1–18, serve as a signal peptide directing secretion; that stretch reads MELVLVFLCSLLAPMVLA. Residues 19–35 are Extracellular-facing; that stretch reads STAEKEKEMDPFHYDYQ. A helical transmembrane segment spans residues 36–58; that stretch reads TLRIGGLVFAVVLFSVGILLILS. Topologically, residues 59-95 are cytoplasmic; that stretch reads RRCKCSFNQKPRAPGDEEAQVENLITANATEPQKAEN.

Belongs to the FXYD family. Regulatory subunit of the sodium/potassium-transporting ATPase which is composed of a catalytic alpha subunit, a non-catalytic beta subunit and an additional regulatory subunit. The regulatory subunit, a member of the FXYD protein family, modulates the enzymatic activity in a tissue- and isoform-specific way by changing affinities of the Na+/K+-ATPase toward Na(+), K(+) or ATP.

The protein resides in the cell membrane. Functionally, associates with and regulates the activity of the sodium/potassium-transporting ATPase (NKA) which catalyzes the hydrolysis of ATP coupled with the exchange of Na(+) and K(+) ions across the plasma membrane. Reduces the apparent affinity for intracellular Na(+) with no change in the apparent affinity for extracellular K(+). In addition to modulating NKA kinetics, may also function as a regulator of NKA localization to the plasma membrane. In Macaca fascicularis (Crab-eating macaque), this protein is FXYD domain-containing ion transport regulator 6 (FXYD6).